The chain runs to 426 residues: Putative F-box/LRR-repeat protein At4g15060 (426 aa).

Residues 25 to 71 enclose the F-box domain; sequence MDKISRLPDDLLVKVLLFLPTKIAVSTSILSKRWEFLWMWLPKLEYH. 9 LRR repeats span residues 50 to 75, 80 to 106, 160 to 187, 188 to 213, 221 to 259, 265 to 290, 311 to 337, 338 to 363, and 373 to 399; these read STSI…NTNY, EQRL…RLKF, ILKL…LLKR, VTYK…VVER, TLSI…KLTD, ETEL…HIDS, CVKV…KLCP, CDSN…EIKL, and DPAC…TWTW.

The protein is Putative F-box/LRR-repeat protein At4g15060 of Arabidopsis thaliana (Mouse-ear cress).